A 548-amino-acid polypeptide reads, in one-letter code: Chaperonin GroEL (548 aa).

Residues 30–33 (TLGP), K51, 87–91 (DGTTT), G415, 479–481 (NAA), and D495 each bind ATP. The tract at residues 526–548 (REDKSSDVASSPAGGMGGMGGMM) is disordered. Gly residues predominate over residues 539 to 548 (GGMGGMGGMM).

The protein belongs to the chaperonin (HSP60) family. As to quaternary structure, forms a cylinder of 14 subunits composed of two heptameric rings stacked back-to-back. Interacts with the co-chaperonin GroES.

The protein resides in the cytoplasm. The catalysed reaction is ATP + H2O + a folded polypeptide = ADP + phosphate + an unfolded polypeptide.. Together with its co-chaperonin GroES, plays an essential role in assisting protein folding. The GroEL-GroES system forms a nano-cage that allows encapsulation of the non-native substrate proteins and provides a physical environment optimized to promote and accelerate protein folding. This chain is Chaperonin GroEL, found in Buchnera aphidicola subsp. Schizaphis graminum (strain Sg).